Reading from the N-terminus, the 69-residue chain is Amphipathic peptide OcyC2 (69 aa).

The N-terminal stretch at M1 to G23 is a signal peptide. At I37 the chain carries Isoleucine amide. The propeptide occupies G41–K69.

Belongs to the non-disulfide-bridged peptide (NDBP) superfamily. Short antimicrobial peptide (group 4) family. In terms of tissue distribution, expressed by the venom gland.

The protein localises to the secreted. It localises to the target cell membrane. Its function is as follows. Amphipathic peptide with antimicrobial activity. Shows antifungal activity with MIC values ranging from 25 to 200 uM. Does not show antifungal activity against Candida glabrata (ATCC90030) and Candida parapsilosis (ATCC22019) (MIC&gt;400 uM). This chain is Amphipathic peptide OcyC2, found in Opisthacanthus cayaporum (South American scorpion).